The sequence spans 244 residues: uncharacterized protein (244 aa).

Positions 1–78 (MKKRFIYHDE…PKFNFMDRYY (78 aa)) constitute a WGR domain.

This is an uncharacterized protein from Escherichia coli (strain K12).